We begin with the raw amino-acid sequence, 668 residues long: Break repair meiotic recombinase recruitment factor 1 (668 aa).

Disordered regions lie at residues 1 to 142 (MTKR…AQSP), 155 to 333 (LQEA…GCSS), 349 to 465 (LEER…GGQN), 482 to 521 (VLEHREIADDPLQEPGAQQGIPDTTSELAGQRDHLPHSAD), and 642 to 668 (LGGKAPLPYPSKGPGNIPRGDPPWREL). Over residues 114-125 (TRKEEMKDEDRG) the composition is skewed to basic and acidic residues. Residues 166–180 (QADSARPEQSSQSPV) are compositionally biased toward polar residues. Positions 208–251 (SQDHLSEQGADDSKPETDRVPGDGGQKEHLPSIDSEGEKPDRGA) are enriched in basic and acidic residues. Low complexity predominate over residues 279–296 (TPASAPTSGPAPGLGPAS). Residues 305 to 316 (AQGSPDPQQTPS) are compositionally biased toward polar residues. S370 bears the Phosphoserine mark. Low complexity predominate over residues 391 to 400 (TGETTGESGE).

As to quaternary structure, interacts with HSF2BP (via N-terminus) and BRCA2; the interaction with HSF2BP is direct and allows the formation of a ternary complex. The complex BRME1:HSF2BP:BRCA2 interacts with SPATA22, MEIOB and RAD51.

The protein resides in the chromosome. Its function is as follows. Meiotic recombination factor component of recombination bridges involved in meiotic double-strand break repair. Modulates the localization of recombinases DMC1:RAD51 to meiotic double-strand break (DSB) sites through the interaction with and stabilization of the BRCA2:HSF2BP complex during meiotic recombination. Indispensable for the DSB repair, homologous synapsis, and crossover formation that are needed for progression past metaphase I, is essential for spermatogenesis and male fertility. This Homo sapiens (Human) protein is Break repair meiotic recombinase recruitment factor 1.